Reading from the N-terminus, the 392-residue chain is Chorismate synthase (392 aa).

NADP(+) is bound by residues Arg40 and Arg46. Residues 135 to 137, 256 to 257, Gly300, 315 to 319, and Arg341 contribute to the FMN site; these read RAS, QA, and KPIAT.

It belongs to the chorismate synthase family. Homotetramer. It depends on FMNH2 as a cofactor.

It catalyses the reaction 5-O-(1-carboxyvinyl)-3-phosphoshikimate = chorismate + phosphate. It functions in the pathway metabolic intermediate biosynthesis; chorismate biosynthesis; chorismate from D-erythrose 4-phosphate and phosphoenolpyruvate: step 7/7. In terms of biological role, catalyzes the anti-1,4-elimination of the C-3 phosphate and the C-6 proR hydrogen from 5-enolpyruvylshikimate-3-phosphate (EPSP) to yield chorismate, which is the branch point compound that serves as the starting substrate for the three terminal pathways of aromatic amino acid biosynthesis. This reaction introduces a second double bond into the aromatic ring system. This chain is Chorismate synthase, found in Nocardioides sp. (strain ATCC BAA-499 / JS614).